A 147-amino-acid chain; its full sequence is Basic phospholipase A2 beta-bungarotoxin A4 chain (147 aa).

The N-terminal stretch at 1 to 19 (MNPAHLLVLSAVCVSLLGA) is a signal peptide. Positions 20–27 (ANIPPHPL) are excised as a propeptide. Disulfide bonds link Cys54-Cys146, Cys56-Cys72, Cys71-Cys127, Cys78-Cys120, Cys88-Cys113, and Cys106-Cys118. Tyr55, Gly57, and Gly59 together coordinate Ca(2+). Residue His75 is part of the active site. Ca(2+) is bound at residue Asp76. Asp121 is an active-site residue.

Belongs to the phospholipase A2 family. Group I subfamily. D49 sub-subfamily. Heterodimer; disulfide-linked. The A chain has phospholipase A2 activity and the B chain shows homology with the basic protease inhibitors. Requires Ca(2+) as cofactor. In terms of tissue distribution, expressed by the venom gland.

It localises to the secreted. It carries out the reaction a 1,2-diacyl-sn-glycero-3-phosphocholine + H2O = a 1-acyl-sn-glycero-3-phosphocholine + a fatty acid + H(+). Its function is as follows. Snake venom phospholipase A2 (PLA2) that shows presynaptic neurotoxicity. The A chain has phospholipase activity. PLA2 catalyzes the calcium-dependent hydrolysis of the 2-acyl groups in 3-sn-phosphoglycerides. The sequence is that of Basic phospholipase A2 beta-bungarotoxin A4 chain from Bungarus candidus (Malayan krait).